Reading from the N-terminus, the 459-residue chain is Xylose/arabinose-binding protein XacG (459 aa).

Residues 19–36 form a helical membrane-spanning segment; sequence ALTVGAAAGIAGCTGGGG. The tract at residues 27–68 is disordered; the sequence is GIAGCTGGGGTETESTESGNGNGSGGSTDDTETSGSSSGESW.

This sequence belongs to the bacterial solute-binding protein 1 family. The complex is composed of two ATP-binding proteins (XacJ and XacK), two transmembrane proteins (XacH and XacI) and a solute-binding protein (XacG).

It localises to the cell membrane. In terms of biological role, part of the ABC transporter complex XacGHIJK involved in the uptake of xylose and arabinose. This Haloferax volcanii (strain ATCC 29605 / DSM 3757 / JCM 8879 / NBRC 14742 / NCIMB 2012 / VKM B-1768 / DS2) (Halobacterium volcanii) protein is Xylose/arabinose-binding protein XacG.